A 241-amino-acid polypeptide reads, in one-letter code: General transcription factor IIF subunit 2 (241 aa).

The protein belongs to the TFIIF beta subunit family. As to quaternary structure, heterodimer of an alpha and a beta subunit.

It localises to the nucleus. Its function is as follows. TFIIF is a general transcription initiation factor that binds to RNA polymerase II and helps to recruit it to the initiation complex in collaboration with TFIIB. The protein is General transcription factor IIF subunit 2 (gtf2f2) of Dictyostelium discoideum (Social amoeba).